Reading from the N-terminus, the 629-residue chain is Methyl-accepting chemotaxis protein PctB (629 aa).

The Cytoplasmic segment spans residues 1 to 10; sequence MIKSLKFSHK. Residues 11-31 form a helical membrane-spanning segment; the sequence is ILLAAALVVIATFSLFTLYND. The Periplasmic portion of the chain corresponds to 32-276; it reads SLQRASIRED…AYAMLTKLRT (245 aa). Residues 37-260 form the Cache domain; it reads SIREDLEDYL…LSGLDWYIGI (224 aa). L-arginine is bound by residues Y109, S115, Y121, 126–128, E146, and D173; that span reads RPW. L-glutamine-binding positions include S115, Y121, 126–128, 144–146, and D173; these read RPW and YME. Residues 277-297 traverse the membrane as a helical segment; that stretch reads SAIVAALIAVVAIVLLLGMLI. Residues 298–352 form the HAMP domain; it reads RVLMQPLTDMGRAMQDIAQGEGDLTKRLKVTSNDEFGALAISFNRFVERIHESIR. The Cytoplasmic portion of the chain corresponds to 298-629; that stretch reads RVLMQPLTDM…LRQLVDSFKI (332 aa). Positions 357-593 constitute a Methyl-accepting transducer domain; that stretch reads TARQLHDVAQ…SLNMDITEIN (237 aa). The interval 405–424 is disordered; the sequence is RNAADASHHASDANHQAEDG. Positions 410–424 are enriched in basic and acidic residues; the sequence is ASHHASDANHQAEDG.

The protein belongs to the methyl-accepting chemotaxis (MCP) protein family. As to quaternary structure, monomer in the absence and presence of ligands.

The protein resides in the cell inner membrane. Chemotactic-signal transducers respond to changes in the concentration of attractants and repellents in the environment, transduce a signal from the outside to the inside of the cell, and facilitate sensory adaptation through the variation of the level of methylation. Responds to L-Arg, L-Gln, L-Ala, L-Glu, L-Lys, L-Met and L-Tyr. Also involved in repellent responses to trichloroethylene (TCE), chloroform and methylthiocyanate. The protein is Methyl-accepting chemotaxis protein PctB (pctB) of Pseudomonas aeruginosa (strain ATCC 15692 / DSM 22644 / CIP 104116 / JCM 14847 / LMG 12228 / 1C / PRS 101 / PAO1).